Reading from the N-terminus, the 174-residue chain is Secreted protein A (174 aa).

Positions 1 to 19 (MRLLITLFAIFALFNCSLA) are cleaved as a signal peptide. The N-linked (GlcNAc...) asparagine glycan is linked to Asn156.

This sequence belongs to the Sct family. Probably contains disulfide bonds.

Its subcellular location is the secreted. The protein resides in the extracellular vesicle. This Dictyostelium discoideum (Social amoeba) protein is Secreted protein A (p17).